Here is a 245-residue protein sequence, read N- to C-terminus: MNVTLLIPARYGSSRFPGKPLAPINGKPMIQHVYERAALAKGLTAIYVATDDLRIKEAVEAFGGKVVMTDANAASGTDRIEDAITQLGLADDDLVINLQGDQPLIDPISIEQIITLFERHPGEFGMATLGYEITEEHELNDPKHVKMVFDNQFNALYFSRARIPFGRDTDDYPVYKHLGVYAYTREFVRTFNKLPLGRLEDLEKLEQLRALEHGHTIKVAISAFDSPEVDTPEDIRICEARLAVD.

It belongs to the KdsB family.

It is found in the cytoplasm. It carries out the reaction 8-amino-3,8-dideoxy-alpha-D-manno-octulosonate + CTP = CMP-8-amino-3,8-dideoxy-alpha-D-manno-oct-2-ulosonate + diphosphate. It functions in the pathway bacterial outer membrane biogenesis; lipopolysaccharide biosynthesis. Its function is as follows. Activates KDO8N (a required 8-carbon sugar) for incorporation into bacterial lipopolysaccharide in the Shewanella genus. In Shewanella loihica (strain ATCC BAA-1088 / PV-4), this protein is 8-amino-3,8-dideoxy-manno-octulosonate cytidylyltransferase.